Consider the following 50-residue polypeptide: U-megalopygitoxin(9)-Mo13 (50 aa).

Residues 1-23 form the signal peptide; that stretch reads MKLVFLFFIVAVMVSLFVGMTEA. An intrachain disulfide couples cysteine 33 to cysteine 40.

It belongs to the caterpillar 9 family. As to expression, expressed by the venom apparatus.

The protein resides in the secreted. Functionally, probable toxin. This is U-megalopygitoxin(9)-Mo13 from Megalopyge opercularis (Southern flannel moth).